A 563-amino-acid polypeptide reads, in one-letter code: Probable terpene synthase 4 (563 aa).

The Mg(2+) site is built by Asp-316, Asp-320, and Glu-469. The DDXXD motif motif lies at 316–320; it reads DDIFD.

The protein belongs to the terpene synthase family. The cofactor is Mg(2+).

Functionally, probable sesquiterpene synthase. This is Probable terpene synthase 4 (TPS4) from Ricinus communis (Castor bean).